Here is a 557-residue protein sequence, read N- to C-terminus: Urocanate hydratase (557 aa).

NAD(+)-binding positions include 53–54 (GG), glutamine 131, 177–179 (GMG), glutamate 197, 243–244 (NA), 264–268 (QTSAH), 274–275 (YL), and tyrosine 323. Cysteine 411 is an active-site residue. Glycine 493 serves as a coordination point for NAD(+).

The protein belongs to the urocanase family. NAD(+) is required as a cofactor.

It localises to the cytoplasm. It catalyses the reaction 4-imidazolone-5-propanoate = trans-urocanate + H2O. The protein operates within amino-acid degradation; L-histidine degradation into L-glutamate; N-formimidoyl-L-glutamate from L-histidine: step 2/3. Its function is as follows. Catalyzes the conversion of urocanate to 4-imidazolone-5-propionate. The chain is Urocanate hydratase from Mesorhizobium japonicum (strain LMG 29417 / CECT 9101 / MAFF 303099) (Mesorhizobium loti (strain MAFF 303099)).